The sequence spans 276 residues: BES1/BZR1 homolog protein 1 (276 aa).

Disordered stretches follow at residues 1–30 (MTAS…RERR), 76–125 (TTYR…PTRF), and 155–191 (SAPV…PTRR). The required for DNA-binding stretch occupies residues 14 to 87 (RMPTWKEREN…YRKGSRPTET (74 aa)). Over residues 84-103 (PTETTVPCSSIQLSPQSSAF) the composition is skewed to polar residues. A compositionally biased stretch (low complexity) spans 104 to 122 (QSPIPSYQASPSSSSYPSP). T159 carries the post-translational modification Phosphothreonine. Positions 164–174 (SPRRSNPRLPR) are enriched in low complexity. The span at 175–189 (WQSSNFPVSAPSSPT) shows a compositional bias: polar residues.

It belongs to the BZR/LAT61 family. Post-translationally, phosphorylated. Phosphorylation increases protein degradation.

The protein is BES1/BZR1 homolog protein 1 (BEH1) of Arabidopsis thaliana (Mouse-ear cress).